The following is a 243-amino-acid chain: tRNA (guanine-N(7)-)-methyltransferase (243 aa).

Glu74, Glu99, Asp126, and Asp149 together coordinate S-adenosyl-L-methionine. The active site involves Asp149. Substrate contacts are provided by residues Lys153, Asp185, and 221–224 (TKFE).

The protein belongs to the class I-like SAM-binding methyltransferase superfamily. TrmB family.

It carries out the reaction guanosine(46) in tRNA + S-adenosyl-L-methionine = N(7)-methylguanosine(46) in tRNA + S-adenosyl-L-homocysteine. The protein operates within tRNA modification; N(7)-methylguanine-tRNA biosynthesis. In terms of biological role, catalyzes the formation of N(7)-methylguanine at position 46 (m7G46) in tRNA. The polypeptide is tRNA (guanine-N(7)-)-methyltransferase (Psychromonas ingrahamii (strain DSM 17664 / CCUG 51855 / 37)).